The sequence spans 411 residues: Phosphopentomutase (411 aa).

Positions 14, 306, 311, 347, 348, and 359 each coordinate Mn(2+).

It belongs to the phosphopentomutase family. Requires Mn(2+) as cofactor.

It localises to the cytoplasm. The catalysed reaction is 2-deoxy-alpha-D-ribose 1-phosphate = 2-deoxy-D-ribose 5-phosphate. It carries out the reaction alpha-D-ribose 1-phosphate = D-ribose 5-phosphate. It participates in carbohydrate degradation; 2-deoxy-D-ribose 1-phosphate degradation; D-glyceraldehyde 3-phosphate and acetaldehyde from 2-deoxy-alpha-D-ribose 1-phosphate: step 1/2. Isomerase that catalyzes the conversion of deoxy-ribose 1-phosphate (dRib-1-P) and ribose 1-phosphate (Rib-1-P) to deoxy-ribose 5-phosphate (dRib-5-P) and ribose 5-phosphate (Rib-5-P), respectively. The polypeptide is Phosphopentomutase (Lactococcus lactis subsp. lactis (strain IL1403) (Streptococcus lactis)).